A 323-amino-acid chain; its full sequence is ComG operon protein 2 homolog (323 aa).

4 helical membrane passes run 93-113 (YPLL…YFVL), 141-161 (LPWL…TYFV), 188-208 (VITC…LSIM), and 296-316 (IVFS…MLPV).

Belongs to the GSP F family.

It localises to the cell membrane. In terms of biological role, required for transformation and DNA binding. This chain is ComG operon protein 2 homolog (comGB), found in Halalkalibacterium halodurans (strain ATCC BAA-125 / DSM 18197 / FERM 7344 / JCM 9153 / C-125) (Bacillus halodurans).